The following is a 168-amino-acid chain: Crossover junction endodeoxyribonuclease RuvC (168 aa).

Active-site residues include D7, E66, and D138. 3 residues coordinate Mg(2+): D7, E66, and D138.

Belongs to the RuvC family. In terms of assembly, homodimer which binds Holliday junction (HJ) DNA. The HJ becomes 2-fold symmetrical on binding to RuvC with unstacked arms; it has a different conformation from HJ DNA in complex with RuvA. In the full resolvosome a probable DNA-RuvA(4)-RuvB(12)-RuvC(2) complex forms which resolves the HJ. Mg(2+) serves as cofactor.

Its subcellular location is the cytoplasm. It carries out the reaction Endonucleolytic cleavage at a junction such as a reciprocal single-stranded crossover between two homologous DNA duplexes (Holliday junction).. Functionally, the RuvA-RuvB-RuvC complex processes Holliday junction (HJ) DNA during genetic recombination and DNA repair. Endonuclease that resolves HJ intermediates. Cleaves cruciform DNA by making single-stranded nicks across the HJ at symmetrical positions within the homologous arms, yielding a 5'-phosphate and a 3'-hydroxyl group; requires a central core of homology in the junction. The consensus cleavage sequence is 5'-(A/T)TT(C/G)-3'. Cleavage occurs on the 3'-side of the TT dinucleotide at the point of strand exchange. HJ branch migration catalyzed by RuvA-RuvB allows RuvC to scan DNA until it finds its consensus sequence, where it cleaves and resolves the cruciform DNA. This is Crossover junction endodeoxyribonuclease RuvC from Cereibacter sphaeroides (strain ATCC 17023 / DSM 158 / JCM 6121 / CCUG 31486 / LMG 2827 / NBRC 12203 / NCIMB 8253 / ATH 2.4.1.) (Rhodobacter sphaeroides).